A 1121-amino-acid chain; its full sequence is Ataxin-2 homolog (1121 aa).

Residues 1-10 are compositionally biased toward basic residues; the sequence is MNNNSKRKTR. The disordered stretch occupies residues 1–53; sequence MNNNSKRKTRPSGGGGGGGASGGISRYNANDNSLRPANNKSGAAGNSAGAGAG. Residues 12–22 are compositionally biased toward gly residues; it reads SGGGGGGGASG. Over residues 27-36 the composition is skewed to polar residues; it reads YNANDNSLRP. Positions 37–47 are enriched in low complexity; it reads ANNKSGAAGNS. The region spanning 71 to 146 is the Sm domain; that stretch reads FFMHSATALV…VVKIVAKDFD (76 aa). A phosphoserine mark is found at Ser-219 and Ser-232. Disordered regions lie at residues 270–376, 422–458, 476–935, and 1039–1076; these read FAAV…GQGG, GKVM…GGYQ, MHGS…TTGT, and QTPQ…TPPT. A compositionally biased stretch (basic and acidic residues) spans 274–310; that stretch reads ERPEQDHRRDGDRERERNDRDREREERDRDRDRDRGN. Positions 323–347 are enriched in polar residues; sequence ETMSSDRYITKQTRGPQMSHVSMSS. Composition is skewed to gly residues over residues 367 to 376 and 434 to 448; these read ISGGGAGQGG and SGGG…GNGN. 2 stretches are compositionally biased toward polar residues: residues 476–487 and 499–524; these read MHGSSQYRNPSH and ANAN…NSLN. Low complexity-rich tracts occupy residues 552–596, 623–684, 697–711, and 720–773; these read PPLQ…PQRQ, PPQQ…MQHQ, QPHY…QPQP, and QQQQ…APEP. Pro residues predominate over residues 774–789; the sequence is SQQPLPLYHPMPPPQT. Low complexity-rich tracts occupy residues 807-825 and 835-890; these read ILTA…TPKP and TTTP…STPV. Composition is skewed to pro residues over residues 914–926 and 1048–1062; these read PSRP…PVPM and PGQP…PQPS.

Belongs to the ataxin-2 family.

The protein localises to the cytoplasm. In terms of biological role, regulator of actin filament formation, though it does not directly assemble with actin filaments. Required for oocyte specification and oocyte positioning in the female germline. Also required for normal eye development and bristle morphology. This is Ataxin-2 homolog from Drosophila pseudoobscura pseudoobscura (Fruit fly).